The chain runs to 197 residues: Probable molybdenum cofactor guanylyltransferase (197 aa).

GTP contacts are provided by residues 12–14 (LAG), K24, D71, and D103. D103 contributes to the Mg(2+) binding site.

Belongs to the MobA family. Mg(2+) is required as a cofactor.

It is found in the cytoplasm. It carries out the reaction Mo-molybdopterin + GTP + H(+) = Mo-molybdopterin guanine dinucleotide + diphosphate. Transfers a GMP moiety from GTP to Mo-molybdopterin (Mo-MPT) cofactor (Moco or molybdenum cofactor) to form Mo-molybdopterin guanine dinucleotide (Mo-MGD) cofactor. The sequence is that of Probable molybdenum cofactor guanylyltransferase from Mycolicibacterium paratuberculosis (strain ATCC BAA-968 / K-10) (Mycobacterium paratuberculosis).